The sequence spans 202 residues: ATP-dependent Clp protease proteolytic subunit (202 aa).

Serine 101 functions as the Nucleophile in the catalytic mechanism. Histidine 126 is a catalytic residue.

This sequence belongs to the peptidase S14 family. In terms of assembly, component of the chloroplastic Clp protease core complex.

It is found in the plastid. The protein localises to the chloroplast stroma. It catalyses the reaction Hydrolysis of proteins to small peptides in the presence of ATP and magnesium. alpha-casein is the usual test substrate. In the absence of ATP, only oligopeptides shorter than five residues are hydrolyzed (such as succinyl-Leu-Tyr-|-NHMec, and Leu-Tyr-Leu-|-Tyr-Trp, in which cleavage of the -Tyr-|-Leu- and -Tyr-|-Trp bonds also occurs).. Cleaves peptides in various proteins in a process that requires ATP hydrolysis. Has a chymotrypsin-like activity. Plays a major role in the degradation of misfolded proteins. The sequence is that of ATP-dependent Clp protease proteolytic subunit from Illicium oligandrum (Star anise).